A 715-amino-acid chain; its full sequence is Patatin-like phospholipase domain-containing protein ATEG_02594 (715 aa).

The helical transmembrane segment at 84–104 (WPFLAFVLGWISFLGVAYILT) threads the bilayer. In terms of domain architecture, PNPLA spans 274–465 (LCLSGGATFA…RTDIPIKALN (192 aa)). The GXSXG signature appears at 305–309 (GTSGG). Catalysis depends on serine 307, which acts as the Nucleophile. Aspartate 452 functions as the Proton acceptor in the catalytic mechanism. The tract at residues 613-715 (TAPRGGGRAT…DVDSDTWKGQ (103 aa)) is disordered. The segment covering 652–661 (RTGEYSKEAD) has biased composition (basic and acidic residues). Positions 665–678 (AEMSDSSGVDSATA) are enriched in polar residues.

This sequence belongs to the PLPL family.

It is found in the membrane. Probable lipid hydrolase. The sequence is that of Patatin-like phospholipase domain-containing protein ATEG_02594 from Aspergillus terreus (strain NIH 2624 / FGSC A1156).